Reading from the N-terminus, the 265-residue chain is Phosphatidylserine decarboxylase proenzyme (265 aa).

Catalysis depends on serine 183, which acts as the Schiff-base intermediate with substrate; via pyruvic acid. Pyruvic acid (Ser); by autocatalysis is present on serine 183. Positions threonine 216–arginine 246 are disordered.

This sequence belongs to the phosphatidylserine decarboxylase family. PSD-A subfamily. In terms of assembly, heterodimer of a large membrane-associated beta subunit and a small pyruvoyl-containing alpha subunit. Requires pyruvate as cofactor. Post-translationally, is synthesized initially as an inactive proenzyme. Formation of the active enzyme involves a self-maturation process in which the active site pyruvoyl group is generated from an internal serine residue via an autocatalytic post-translational modification. Two non-identical subunits are generated from the proenzyme in this reaction, and the pyruvate is formed at the N-terminus of the alpha chain, which is derived from the carboxyl end of the proenzyme. The post-translation cleavage follows an unusual pathway, termed non-hydrolytic serinolysis, in which the side chain hydroxyl group of the serine supplies its oxygen atom to form the C-terminus of the beta chain, while the remainder of the serine residue undergoes an oxidative deamination to produce ammonia and the pyruvoyl prosthetic group on the alpha chain.

It localises to the cell membrane. It carries out the reaction a 1,2-diacyl-sn-glycero-3-phospho-L-serine + H(+) = a 1,2-diacyl-sn-glycero-3-phosphoethanolamine + CO2. It participates in phospholipid metabolism; phosphatidylethanolamine biosynthesis; phosphatidylethanolamine from CDP-diacylglycerol: step 2/2. In terms of biological role, catalyzes the formation of phosphatidylethanolamine (PtdEtn) from phosphatidylserine (PtdSer). This is Phosphatidylserine decarboxylase proenzyme from Neisseria meningitidis serogroup B (strain ATCC BAA-335 / MC58).